The sequence spans 846 residues: Major vault protein beta (846 aa).

The residue at position 2 (alanine 2) is an N-acetylalanine. 9 MVP repeats span residues alanine 2–arginine 60, glutamine 61–proline 115, leucine 116–arginine 172, alanine 173–glutamine 225, alanine 226–lysine 280, alanine 281–valine 332, asparagine 333–arginine 388, isoleucine 389–valine 458, and isoleucine 459–proline 521.

As to quaternary structure, the vault ribonucleoprotein particle is a huge (400 A x 670 A) cage structure of 12.9 MDa. It consists of a dimer of half-vaults, with each half-vault comprising 39 identical major vault protein (MVP) chains. Dictyostelium is one of the few organisms in which the major component is actually two proteins (alpha and beta).

Its subcellular location is the cytoplasm. It localises to the nucleus. Functionally, unknown, though MVP-beta is required for normal vault structure. This Dictyostelium discoideum (Social amoeba) protein is Major vault protein beta (mvpB).